Consider the following 339-residue polypeptide: Ketol-acid reductoisomerase (NADP(+)) (339 aa).

Positions 1–182 (MRVYYDRDAD…GGGRSGIIET (182 aa)) constitute a KARI N-terminal Rossmann domain. NADP(+) is bound by residues 24–27 (YGSQ), lysine 48, serine 51, threonine 53, and 83–86 (DELQ). Histidine 108 is an active-site residue. Glycine 134 contacts NADP(+). The KARI C-terminal knotted domain occupies 183–328 (NFKEECETDL…AKLRGMMPWI (146 aa)). Aspartate 191, glutamate 195, glutamate 227, and glutamate 231 together coordinate Mg(2+). Residue serine 252 participates in substrate binding.

The protein belongs to the ketol-acid reductoisomerase family. The cofactor is Mg(2+).

The catalysed reaction is (2R)-2,3-dihydroxy-3-methylbutanoate + NADP(+) = (2S)-2-acetolactate + NADPH + H(+). The enzyme catalyses (2R,3R)-2,3-dihydroxy-3-methylpentanoate + NADP(+) = (S)-2-ethyl-2-hydroxy-3-oxobutanoate + NADPH + H(+). The protein operates within amino-acid biosynthesis; L-isoleucine biosynthesis; L-isoleucine from 2-oxobutanoate: step 2/4. It participates in amino-acid biosynthesis; L-valine biosynthesis; L-valine from pyruvate: step 2/4. Involved in the biosynthesis of branched-chain amino acids (BCAA). Catalyzes an alkyl-migration followed by a ketol-acid reduction of (S)-2-acetolactate (S2AL) to yield (R)-2,3-dihydroxy-isovalerate. In the isomerase reaction, S2AL is rearranged via a Mg-dependent methyl migration to produce 3-hydroxy-3-methyl-2-ketobutyrate (HMKB). In the reductase reaction, this 2-ketoacid undergoes a metal-dependent reduction by NADPH to yield (R)-2,3-dihydroxy-isovalerate. The polypeptide is Ketol-acid reductoisomerase (NADP(+)) (Sinorhizobium fredii (strain NBRC 101917 / NGR234)).